We begin with the raw amino-acid sequence, 973 residues long: GATOR2 complex protein WDR59 (973 aa).

6 WD repeats span residues 57 to 98 (QSKW…GEVC), 103 to 143 (GHTR…KPTV), 146 to 185 (SAVAGASQVKWNKKNANCLATSHDGDVRIWDKRKPSTAVE), 189 to 229 (AHLS…KYLN), 232 to 276 (PCQV…TPVH), and 280 to 324 (GHDD…QRLC). A disordered region spans residues 346 to 365 (DKALQPQDSEPQHSSGHGDE). A compositionally biased stretch (polar residues) spans 351 to 360 (PQDSEPQHSS). The RWD domain maps to 393 to 494 (QEFSLINVQI…RQLVSWLESV (102 aa)). A C4-type zinc finger spans residues 900 to 920 (YCSHCRSEARGTQCAICKGFT). Zn(2+)-binding residues include C901, C904, C913, C916, C926, C937, H942, H945, H948, C959, C963, C965, and C967. Residues 921 to 970 (FQCAICHVAVRGSSNFCLTCGHGGHTSHMMEWFRTQEVCPTGCGCHCLLE) form an RING-type; atypical zinc finger.

It belongs to the WD repeat WDR59 family. Component of the GATOR2 subcomplex, composed of MIOS, SEC13, SEH1L, WDR24 and WDR59. The GATOR2 complex interacts with CASTOR1 and CASTOR2; the interaction is negatively regulated by arginine. The GATOR2 complex interacts with SESN1, SESN2 and SESN3; the interaction is negatively regulated by amino acids. Interacts with DDB1-CUL4A/B E3 ligase complexes.

It is found in the lysosome membrane. The GATOR2 complex is negatively regulated by the upstream amino acid sensors CASTOR1 and SESN2, which sequester the GATOR2 complex in absence of amino acids. In the presence of abundant amino acids, GATOR2 is released from CASTOR1 and SESN2 and activated. Its function is as follows. As a component of the GATOR2 complex, functions as an activator of the amino acid-sensing branch of the mTORC1 signaling pathway. The GATOR2 complex indirectly activates mTORC1 through the inhibition of the GATOR1 subcomplex. GATOR2 probably acts as an E3 ubiquitin-protein ligase toward GATOR1. In the presence of abundant amino acids, the GATOR2 complex mediates ubiquitination of the NPRL2 core component of the GATOR1 complex, leading to GATOR1 inactivation. In the absence of amino acids, GATOR2 is inhibited, activating the GATOR1 complex. The chain is GATOR2 complex protein WDR59 from Gallus gallus (Chicken).